The sequence spans 391 residues: Succinate--CoA ligase [ADP-forming] subunit beta (391 aa).

The ATP-grasp domain maps to 9 to 245 (KQIFAKYGVP…ISEEDADERE (237 aa)). Residues Lys46, 53–55 (GRG), Glu99, Ala102, and Glu107 contribute to the ATP site. 2 residues coordinate Mg(2+): Asn200 and Asp214. Substrate-binding positions include Asn265 and 322–324 (GIV).

This sequence belongs to the succinate/malate CoA ligase beta subunit family. In terms of assembly, heterotetramer of two alpha and two beta subunits. Mg(2+) is required as a cofactor.

It carries out the reaction succinate + ATP + CoA = succinyl-CoA + ADP + phosphate. The catalysed reaction is GTP + succinate + CoA = succinyl-CoA + GDP + phosphate. It functions in the pathway carbohydrate metabolism; tricarboxylic acid cycle; succinate from succinyl-CoA (ligase route): step 1/1. Succinyl-CoA synthetase functions in the citric acid cycle (TCA), coupling the hydrolysis of succinyl-CoA to the synthesis of either ATP or GTP and thus represents the only step of substrate-level phosphorylation in the TCA. The beta subunit provides nucleotide specificity of the enzyme and binds the substrate succinate, while the binding sites for coenzyme A and phosphate are found in the alpha subunit. The protein is Succinate--CoA ligase [ADP-forming] subunit beta of Sulfurimonas denitrificans (strain ATCC 33889 / DSM 1251) (Thiomicrospira denitrificans (strain ATCC 33889 / DSM 1251)).